The sequence spans 52 residues: MISNQQQKDLKKRAAFKKLNVAMNSYVELLFLSVPLIHIFKWLGSLALHLIH.

A helical membrane pass occupies residues 21–40; the sequence is VAMNSYVELLFLSVPLIHIF.

The protein resides in the cell membrane. This is an uncharacterized protein from Bacillus subtilis (strain 168).